The primary structure comprises 65 residues: Antitoxin VapB32 (65 aa).

Residues 46–65 (ALGGTDPQATAAPRRRTSPR) are disordered.

In terms of biological role, antitoxin component of a type II toxin-antitoxin (TA) system. The polypeptide is Antitoxin VapB32 (vapB32) (Mycobacterium tuberculosis (strain CDC 1551 / Oshkosh)).